We begin with the raw amino-acid sequence, 427 residues long: Serine hydroxymethyltransferase (427 aa).

Residues leucine 127 and 131-133 contribute to the (6S)-5,6,7,8-tetrahydrofolate site; that span reads GHL. An N6-(pyridoxal phosphate)lysine modification is found at lysine 236.

This sequence belongs to the SHMT family. As to quaternary structure, homodimer. Pyridoxal 5'-phosphate is required as a cofactor.

The protein resides in the cytoplasm. It catalyses the reaction (6R)-5,10-methylene-5,6,7,8-tetrahydrofolate + glycine + H2O = (6S)-5,6,7,8-tetrahydrofolate + L-serine. It participates in one-carbon metabolism; tetrahydrofolate interconversion. It functions in the pathway amino-acid biosynthesis; glycine biosynthesis; glycine from L-serine: step 1/1. Functionally, catalyzes the reversible interconversion of serine and glycine with tetrahydrofolate (THF) serving as the one-carbon carrier. This reaction serves as the major source of one-carbon groups required for the biosynthesis of purines, thymidylate, methionine, and other important biomolecules. Also exhibits THF-independent aldolase activity toward beta-hydroxyamino acids, producing glycine and aldehydes, via a retro-aldol mechanism. This chain is Serine hydroxymethyltransferase, found in Paramagnetospirillum magneticum (strain ATCC 700264 / AMB-1) (Magnetospirillum magneticum).